A 426-amino-acid chain; its full sequence is Glutamate-1-semialdehyde 2,1-aminomutase (426 aa).

The residue at position 265 (lysine 265) is an N6-(pyridoxal phosphate)lysine.

Belongs to the class-III pyridoxal-phosphate-dependent aminotransferase family. HemL subfamily. As to quaternary structure, homodimer. It depends on pyridoxal 5'-phosphate as a cofactor.

It localises to the cytoplasm. It catalyses the reaction (S)-4-amino-5-oxopentanoate = 5-aminolevulinate. It functions in the pathway porphyrin-containing compound metabolism; protoporphyrin-IX biosynthesis; 5-aminolevulinate from L-glutamyl-tRNA(Glu): step 2/2. The sequence is that of Glutamate-1-semialdehyde 2,1-aminomutase from Actinobacillus pleuropneumoniae serotype 7 (strain AP76).